The sequence spans 172 residues: MAHTLATPVAPSVSLICNTKLSVSLSSSSLAFRPVNPKNGGGLSIKCVRVGNVEIPNNKRVEYSLQYIHGIGRSRARQILCDLTLENKLTKELSEDELLQVRDEVTKYMIEGDLRRFNAIAIRRLKEIQCYRGVRHIQGLPCRGQRTKNNCRTLKRGKRVQIAGKKKPPGPK.

Residues 1–47 constitute a chloroplast transit peptide; the sequence is MAHTLATPVAPSVSLICNTKLSVSLSSSSLAFRPVNPKNGGGLSIKC.

As to quaternary structure, component of the chloroplast small ribosomal subunit (SSU). Mature 70S chloroplast ribosomes of higher plants consist of a small (30S) and a large (50S) subunit. The 30S small subunit contains 1 molecule of ribosomal RNA (16S rRNA) and 24 different proteins. The 50S large subunit contains 3 rRNA molecules (23S, 5S and 4.5S rRNA) and 33 different proteins. uS13c interacts with translation factor pY (PSRP1).

Its subcellular location is the plastid. It is found in the chloroplast. Component of the chloroplast ribosome (chloro-ribosome), a dedicated translation machinery responsible for the synthesis of chloroplast genome-encoded proteins, including proteins of the transcription and translation machinery and components of the photosynthetic apparatus. The polypeptide is Small ribosomal subunit protein uS13c (RPS13) (Spinacia oleracea (Spinach)).